A 427-amino-acid chain; its full sequence is Enolase (427 aa).

Gln-163 contacts (2R)-2-phosphoglycerate. The Proton donor role is filled by Glu-205. Mg(2+)-binding residues include Asp-242, Glu-285, and Asp-312. Residues Lys-337, Arg-366, Ser-367, and Lys-388 each contribute to the (2R)-2-phosphoglycerate site. Lys-337 serves as the catalytic Proton acceptor.

It belongs to the enolase family. Mg(2+) is required as a cofactor.

Its subcellular location is the cytoplasm. The protein localises to the secreted. The protein resides in the cell surface. It catalyses the reaction (2R)-2-phosphoglycerate = phosphoenolpyruvate + H2O. It participates in carbohydrate degradation; glycolysis; pyruvate from D-glyceraldehyde 3-phosphate: step 4/5. Catalyzes the reversible conversion of 2-phosphoglycerate (2-PG) into phosphoenolpyruvate (PEP). It is essential for the degradation of carbohydrates via glycolysis. The chain is Enolase from Rhodopseudomonas palustris (strain HaA2).